Here is a 736-residue protein sequence, read N- to C-terminus: Poly(A) polymerase gamma (736 aa).

At Lys2 the chain carries N6-acetyllysine. Phosphoserine occurs at positions 23 and 29. ATP contacts are provided by residues 99–101 (FGS), Thr108, 112–114 (DID), Asp166, Lys227, Tyr236, and 245–246 (GV). 3 residues coordinate Mg(2+): Asp112, Asp114, and Asp166. A disordered region spans residues 506–564 (KQSLSDVNRSSGGLQSKRLSLDSSCLDSSRDTDNGTPFNSPASKSDSPSVGETERNSAE). The span at 509–519 (LSDVNRSSGGL) shows a compositional bias: polar residues. Low complexity predominate over residues 521–532 (SKRLSLDSSCLD). Ser525 carries the post-translational modification Phosphoserine. Positions 539 to 555 (NGTPFNSPASKSDSPSV) are enriched in polar residues. Residues Ser599 and Ser648 each carry the phosphoserine modification. At Thr654 the chain carries Phosphothreonine. Basic and acidic residues predominate over residues 673 to 685 (DPRTAEERKRKSV). A disordered region spans residues 673 to 720 (DPRTAEERKRKSVDAIGGESMPIPTIDTSRKKRLPSKELPDSSSPVPA). 2 positions are modified to phosphoserine: Ser684 and Ser708.

Belongs to the poly(A) polymerase family. It depends on Mg(2+) as a cofactor. Requires Mn(2+) as cofactor. Expressed predominantly in testis, and weakly in other tissues. Overexpressed in several tumors.

It localises to the nucleus. The catalysed reaction is RNA(n) + ATP = RNA(n)-3'-adenine ribonucleotide + diphosphate. Its function is as follows. Responsible for the post-transcriptional adenylation of the 3'-terminal of mRNA precursors and several small RNAs including signal recognition particle (SRP) RNA, nuclear 7SK RNA, U2 small nuclear RNA, and ribosomal 5S RNA. The chain is Poly(A) polymerase gamma from Homo sapiens (Human).